A 369-amino-acid polypeptide reads, in one-letter code: Cytokine receptor common subunit gamma (369 aa).

A signal peptide spans 1-22 (MLKPSLPFTSLLFLQLPLLGVG). Topologically, residues 23–262 (LNTTILTPNG…ENPFLFALEA (240 aa)) are extracellular. 4 N-linked (GlcNAc...) asparagine glycosylation sites follow: asparagine 24, asparagine 71, asparagine 75, and asparagine 84. An intrachain disulfide couples cysteine 62 to cysteine 72. A disulfide bridge connects residues cysteine 102 and cysteine 115. In terms of domain architecture, Fibronectin type-III spans 156 to 253 (APENLTLHKL…IHWGSNTSKE (98 aa)). Asparagine 159 carries N-linked (GlcNAc...) asparagine glycosylation. Cysteine 182 and cysteine 231 are disulfide-bonded. The WSXWS motif motif lies at 237 to 241 (WSEWS). Asparagine 249 carries N-linked (GlcNAc...) asparagine glycosylation. The chain crosses the membrane as a helical span at residues 263-283 (VVISVGSMGLIISLLCVYFWL). Topologically, residues 284 to 369 (ERTMPRIPTL…PPCYTLKPET (86 aa)) are cytoplasmic. The Box 1 motif signature appears at 286-294 (TMPRIPTLK). Position 292 is a phosphothreonine (threonine 292).

It belongs to the type I cytokine receptor family. Type 5 subfamily. In terms of assembly, the gamma subunit is common to the IL2, IL4, IL7, IL15, IL21 and probably also the IL13 receptors. Interacts with SHB upon interleukin stimulation. Interacts with IL9. (Microbial infection) Interacts with HTLV-1 accessory protein p12I.

The protein localises to the cell membrane. The protein resides in the cell surface. Common subunit for the receptors for a variety of interleukins. Probably in association with IL15RA, involved in the stimulation of neutrophil phagocytosis by IL15. The sequence is that of Cytokine receptor common subunit gamma (IL2RG) from Homo sapiens (Human).